The sequence spans 824 residues: Leucine--tRNA ligase (824 aa).

Residues 42-52 carry the 'HIGH' region motif; it reads PYPSGRIHMGH. The 'KMSKS' region motif lies at 581-585; that stretch reads KMSKS. Lysine 584 contacts ATP.

This sequence belongs to the class-I aminoacyl-tRNA synthetase family.

Its subcellular location is the cytoplasm. The catalysed reaction is tRNA(Leu) + L-leucine + ATP = L-leucyl-tRNA(Leu) + AMP + diphosphate. The protein is Leucine--tRNA ligase of Geotalea daltonii (strain DSM 22248 / JCM 15807 / FRC-32) (Geobacter daltonii).